The primary structure comprises 594 residues: Isocitrate dehydrogenase kinase/phosphatase (594 aa).

Residues 315 to 321 (APGIRGM) and Lys-336 contribute to the ATP site. The active site involves Asp-371.

It belongs to the AceK family.

It is found in the cytoplasm. The enzyme catalyses L-seryl-[isocitrate dehydrogenase] + ATP = O-phospho-L-seryl-[isocitrate dehydrogenase] + ADP + H(+). Bifunctional enzyme which can phosphorylate or dephosphorylate isocitrate dehydrogenase (IDH) on a specific serine residue. This is a regulatory mechanism which enables bacteria to bypass the Krebs cycle via the glyoxylate shunt in response to the source of carbon. When bacteria are grown on glucose, IDH is fully active and unphosphorylated, but when grown on acetate or ethanol, the activity of IDH declines drastically concomitant with its phosphorylation. The sequence is that of Isocitrate dehydrogenase kinase/phosphatase from Klebsiella pneumoniae subsp. pneumoniae (strain ATCC 700721 / MGH 78578).